A 716-amino-acid polypeptide reads, in one-letter code: MIELSSEARAIVEGRHSDPFHYLGRHRENDRQVVRAYLPEASDVRVVDEHGGETTLTRIHDAGLFLGDLPNGAKRYRLRARFGADTVELEDPYRFPPILSDFDLYLLGEGTDQRLYDKLGAHPITMDGVGGTGFVVLAPNARAVAVVGDFNCWDRRRHPMRVRGNGYWELFIPGAQTGDRYKFAITDKSGSLLPLKSDPMAFAAEVRPNTASIVVDEAALPCPTPAAATINARRAPISIYEVHLGSWRRGDDNRWLSYRELADTLPRYASSLGFTHIELMPVNEHPFDGSWGYQPTGLYAPTSRFGSPDDFAHLVDACHREGLGVLLDWVPGHFPDDPHGLGHFDGTAFYEHANPLQGRHLDWDTLIYNYGRTEVVNFLVANALFWLDRYGLDGLRVDAVASMLYLDYSRAEGGWIPNKHGGRENLEAIAFLRRFNREVFAKFPHATTIAEESTAWPQVSRPIEFGGLGFGYKWNMGWMHDTLDYIGKDPIYRKHHHGQILFGLHYAFSENFILPLSHDEVVHEKRSILGRMPGDDWQRFANLRAYYAFMFGHPGKKLMFMGAEFGQEREWNHDHALDWHLLDQARHQGVQAVVRDLNALYRDVPALHELDCDPAGFEWIMANDADRSVFAWMRKGESGRARCLVIANFTPTVHRSYRVRVPFAGKWREALNTDSAHYGGSNVGNNGVVETLDGVIPELSLTLPPLAVIFLVPERA.

The active-site Nucleophile is aspartate 398. The Proton donor role is filled by glutamate 451.

This sequence belongs to the glycosyl hydrolase 13 family. GlgB subfamily. In terms of assembly, monomer.

It carries out the reaction Transfers a segment of a (1-&gt;4)-alpha-D-glucan chain to a primary hydroxy group in a similar glucan chain.. It functions in the pathway glycan biosynthesis; glycogen biosynthesis. Its function is as follows. Catalyzes the formation of the alpha-1,6-glucosidic linkages in glycogen by scission of a 1,4-alpha-linked oligosaccharide from growing alpha-1,4-glucan chains and the subsequent attachment of the oligosaccharide to the alpha-1,6 position. The chain is 1,4-alpha-glucan branching enzyme GlgB from Nitrobacter hamburgensis (strain DSM 10229 / NCIMB 13809 / X14).